Here is a 312-residue protein sequence, read N- to C-terminus: Probable deoxyhypusine synthase (312 aa).

Lys-285 acts as the Nucleophile in catalysis.

The protein belongs to the deoxyhypusine synthase family. Requires NAD(+) as cofactor.

The enzyme catalyses [eIF5A protein]-L-lysine + spermidine = [eIF5A protein]-deoxyhypusine + propane-1,3-diamine. It functions in the pathway protein modification; eIF5A hypusination. Functionally, catalyzes the NAD-dependent oxidative cleavage of spermidine and the subsequent transfer of the butylamine moiety of spermidine to the epsilon-amino group of a specific lysine residue of the eIF-5A precursor protein to form the intermediate deoxyhypusine residue. The protein is Probable deoxyhypusine synthase (dys) of Saccharolobus solfataricus (strain ATCC 35092 / DSM 1617 / JCM 11322 / P2) (Sulfolobus solfataricus).